The following is a 181-amino-acid chain: Acireductone dioxygenase (181 aa).

Fe(2+) is bound by residues H97, H99, E103, and H141. Ni(2+)-binding residues include H97, H99, E103, and H141.

The protein belongs to the acireductone dioxygenase (ARD) family. As to quaternary structure, monomer. Fe(2+) serves as cofactor. It depends on Ni(2+) as a cofactor.

The catalysed reaction is 1,2-dihydroxy-5-(methylsulfanyl)pent-1-en-3-one + O2 = 3-(methylsulfanyl)propanoate + CO + formate + 2 H(+). It carries out the reaction 1,2-dihydroxy-5-(methylsulfanyl)pent-1-en-3-one + O2 = 4-methylsulfanyl-2-oxobutanoate + formate + 2 H(+). The protein operates within amino-acid biosynthesis; L-methionine biosynthesis via salvage pathway; L-methionine from S-methyl-5-thio-alpha-D-ribose 1-phosphate: step 5/6. Catalyzes 2 different reactions between oxygen and the acireductone 1,2-dihydroxy-3-keto-5-methylthiopentene (DHK-MTPene) depending upon the metal bound in the active site. Fe-containing acireductone dioxygenase (Fe-ARD) produces formate and 2-keto-4-methylthiobutyrate (KMTB), the alpha-ketoacid precursor of methionine in the methionine recycle pathway. Ni-containing acireductone dioxygenase (Ni-ARD) produces methylthiopropionate, carbon monoxide and formate, and does not lie on the methionine recycle pathway. This is Acireductone dioxygenase from Pseudomonas savastanoi pv. phaseolicola (strain 1448A / Race 6) (Pseudomonas syringae pv. phaseolicola (strain 1448A / Race 6)).